The chain runs to 393 residues: Chorismate synthase (393 aa).

Positions 40 and 46 each coordinate NADP(+). Residues 129 to 131, 249 to 250, glycine 301, 316 to 320, and arginine 342 each bind FMN; these read RSS, QA, and KPIPT.

Belongs to the chorismate synthase family. As to quaternary structure, homotetramer. FMNH2 serves as cofactor.

The catalysed reaction is 5-O-(1-carboxyvinyl)-3-phosphoshikimate = chorismate + phosphate. Its pathway is metabolic intermediate biosynthesis; chorismate biosynthesis; chorismate from D-erythrose 4-phosphate and phosphoenolpyruvate: step 7/7. In terms of biological role, catalyzes the anti-1,4-elimination of the C-3 phosphate and the C-6 proR hydrogen from 5-enolpyruvylshikimate-3-phosphate (EPSP) to yield chorismate, which is the branch point compound that serves as the starting substrate for the three terminal pathways of aromatic amino acid biosynthesis. This reaction introduces a second double bond into the aromatic ring system. In Pelobacter propionicus (strain DSM 2379 / NBRC 103807 / OttBd1), this protein is Chorismate synthase.